Consider the following 557-residue polypeptide: Formate--tetrahydrofolate ligase (557 aa).

65-72 (TPAGEGKT) is an ATP binding site.

It belongs to the formate--tetrahydrofolate ligase family.

It carries out the reaction (6S)-5,6,7,8-tetrahydrofolate + formate + ATP = (6R)-10-formyltetrahydrofolate + ADP + phosphate. It participates in one-carbon metabolism; tetrahydrofolate interconversion. This chain is Formate--tetrahydrofolate ligase, found in Methylobacterium radiotolerans (strain ATCC 27329 / DSM 1819 / JCM 2831 / NBRC 15690 / NCIMB 10815 / 0-1).